The sequence spans 1205 residues: Chromosome partition protein Smc (1205 aa).

32-39 contributes to the ATP binding site; the sequence is PNGSGKSN. Coiled coils occupy residues 169–288 and 330–499; these read KHRK…SIQH and EELE…GLQR. The SMC hinge domain occupies 514-628; sequence GLFGSIAQLV…VNDLTEAMGL (115 aa). Coiled coils occupy residues 661-771, 802-836, and 979-1033; these read LEVT…AQET, AVRT…RAQQ, and DRVT…KDLL.

This sequence belongs to the SMC family. As to quaternary structure, homodimer.

The protein resides in the cytoplasm. Required for chromosome condensation and partitioning. The chain is Chromosome partition protein Smc from Mycobacterium tuberculosis (strain ATCC 25618 / H37Rv).